The chain runs to 23 residues: Caerulein precursor fragment R6 (23 aa).

In terms of tissue distribution, expressed by the skin glands.

Its subcellular location is the secreted. In terms of biological role, antimicrobial peptide. In Xenopus ruwenzoriensis (Uganda clawed frog), this protein is Caerulein precursor fragment R6.